The sequence spans 198 residues: NADH-quinone oxidoreductase subunit C (198 aa).

Belongs to the complex I 30 kDa subunit family. As to quaternary structure, NDH-1 is composed of 14 different subunits. Subunits NuoB, C, D, E, F, and G constitute the peripheral sector of the complex.

The protein resides in the cell inner membrane. The enzyme catalyses a quinone + NADH + 5 H(+)(in) = a quinol + NAD(+) + 4 H(+)(out). Its function is as follows. NDH-1 shuttles electrons from NADH, via FMN and iron-sulfur (Fe-S) centers, to quinones in the respiratory chain. The immediate electron acceptor for the enzyme in this species is believed to be ubiquinone. Couples the redox reaction to proton translocation (for every two electrons transferred, four hydrogen ions are translocated across the cytoplasmic membrane), and thus conserves the redox energy in a proton gradient. In Janthinobacterium sp. (strain Marseille) (Minibacterium massiliensis), this protein is NADH-quinone oxidoreductase subunit C.